A 297-amino-acid polypeptide reads, in one-letter code: 4-diphosphocytidyl-2-C-methyl-D-erythritol kinase (297 aa).

Lysine 6 is an active-site residue. 94–104 is an ATP binding site; sequence PVAGGMAGGSA. Aspartate 136 is a catalytic residue.

The protein belongs to the GHMP kinase family. IspE subfamily.

It catalyses the reaction 4-CDP-2-C-methyl-D-erythritol + ATP = 4-CDP-2-C-methyl-D-erythritol 2-phosphate + ADP + H(+). It functions in the pathway isoprenoid biosynthesis; isopentenyl diphosphate biosynthesis via DXP pathway; isopentenyl diphosphate from 1-deoxy-D-xylulose 5-phosphate: step 3/6. Its function is as follows. Catalyzes the phosphorylation of the position 2 hydroxy group of 4-diphosphocytidyl-2C-methyl-D-erythritol. This chain is 4-diphosphocytidyl-2-C-methyl-D-erythritol kinase, found in Nocardioides sp. (strain ATCC BAA-499 / JS614).